A 185-amino-acid chain; its full sequence is Elongation factor P (185 aa).

This sequence belongs to the elongation factor P family.

It localises to the cytoplasm. It participates in protein biosynthesis; polypeptide chain elongation. In terms of biological role, involved in peptide bond synthesis. Stimulates efficient translation and peptide-bond synthesis on native or reconstituted 70S ribosomes in vitro. Probably functions indirectly by altering the affinity of the ribosome for aminoacyl-tRNA, thus increasing their reactivity as acceptors for peptidyl transferase. This is Elongation factor P from Caldanaerobacter subterraneus subsp. tengcongensis (strain DSM 15242 / JCM 11007 / NBRC 100824 / MB4) (Thermoanaerobacter tengcongensis).